We begin with the raw amino-acid sequence, 71 residues long: U3-scytotoxin-Sth1h (71 aa).

The N-terminal stretch at 1–33 is a signal peptide; sequence MSQNSITSYKMGFAKHFFLFAVLLCATAMYSVA. The propeptide occupies 34–39; the sequence is EPAQER. 3 cysteine pairs are disulfide-bonded: cysteine 46/cysteine 60, cysteine 53/cysteine 64, and cysteine 59/cysteine 69.

In terms of tissue distribution, expressed by the venom gland.

The protein localises to the secreted. In terms of biological role, probable insect neurotoxin with ion channel impairing activity. Does not show activity on 45 human receptors from 9 families (5-hydroxytryptamine, adrenergic, dopamine, muscarinic, histamine, neurotransmitter, opioid, sigma, and gaba(A) receptors). In vivo, when mixed with U3-SYTX-Sth1a does not cause paralytic or lethal activity when injected into crickets. It is noteworthy that crickets are evolutionarily distant from prey species. The sequence is that of U3-scytotoxin-Sth1h from Scytodes thoracica (Spitting spider).